Consider the following 249-residue polypeptide: MTENQTTPDPGEPGSSADRPGGLVPTGDSAEFVAGRSRKGMFGVRGTGDTSGYGGLRLPAYVPAPAERPYGGWFDEVADGLFLALRERGVPAESVLQVTVDRGEITFYVDRDHLLEICRSLRDDPALRFEMCASVSGVDYGPEVPQRLHSVYHLLSMTYRRRIRLEVALDVDDPHVPSVVEVYPTADYQERETYDMFGIVYDGHPALTRILMPDDWDGHPQRKDYPLGGIPVEYKGAEIPPPDQRRAYS.

Residues 1-29 (MTENQTTPDPGEPGSSADRPGGLVPTGDS) are disordered.

The protein belongs to the complex I 30 kDa subunit family. In terms of assembly, NDH-1 is composed of 14 different subunits. Subunits NuoB, C, D, E, F, and G constitute the peripheral sector of the complex.

Its subcellular location is the cell membrane. The enzyme catalyses a quinone + NADH + 5 H(+)(in) = a quinol + NAD(+) + 4 H(+)(out). Its function is as follows. NDH-1 shuttles electrons from NADH, via FMN and iron-sulfur (Fe-S) centers, to quinones in the respiratory chain. The immediate electron acceptor for the enzyme in this species is believed to be a menaquinone. Couples the redox reaction to proton translocation (for every two electrons transferred, four hydrogen ions are translocated across the cytoplasmic membrane), and thus conserves the redox energy in a proton gradient. The sequence is that of NADH-quinone oxidoreductase subunit C from Saccharopolyspora erythraea (strain ATCC 11635 / DSM 40517 / JCM 4748 / NBRC 13426 / NCIMB 8594 / NRRL 2338).